Here is a 488-residue protein sequence, read N- to C-terminus: DNA polymerase II small subunit (488 aa).

Belongs to the DNA polymerase delta/II small subunit family. Heterodimer of a large subunit and a small subunit.

It catalyses the reaction DNA(n) + a 2'-deoxyribonucleoside 5'-triphosphate = DNA(n+1) + diphosphate. It carries out the reaction Exonucleolytic cleavage in the 3'- to 5'-direction to yield nucleoside 5'-phosphates.. In terms of biological role, possesses two activities: a DNA synthesis (polymerase) and an exonucleolytic activity that degrades single-stranded DNA in the 3' to 5' direction. Has a template-primer preference which is characteristic of a replicative DNA polymerase. The chain is DNA polymerase II small subunit (polB) from Archaeoglobus fulgidus (strain ATCC 49558 / DSM 4304 / JCM 9628 / NBRC 100126 / VC-16).